The chain runs to 282 residues: tRNA N(3)-cytidine methyltransferase METTL6 (282 aa).

S-adenosyl-L-methionine contacts are provided by W45, Y49, G87, D110, D136, L137, and I157.

It belongs to the methyltransferase superfamily. METL family. Monomer. Interacts with SARS1/SerRS; interaction is mediated via tRNA(Ser) and is required for N(3)-methylcytidine methylation.

The protein resides in the cytoplasm. It is found in the nucleus. The catalysed reaction is cytidine(32) in tRNA(Ser) + S-adenosyl-L-methionine = N(3)-methylcytidine(32) in tRNA(Ser) + S-adenosyl-L-homocysteine + H(+). Its function is as follows. S-adenosyl-L-methionine-dependent methyltransferase that mediates N(3)-methylcytidine modification of residue 32 of the tRNA anticodon loop of tRNA(Ser), including tRNA(Ser)(UGA) and tRNA(Ser)(GCU). Interaction with SARS1/SerRS is required for N(3)-methylcytidine methylation. The polypeptide is tRNA N(3)-cytidine methyltransferase METTL6 (Mus musculus (Mouse)).